The chain runs to 457 residues: tRNA modification GTPase MnmE (457 aa).

The (6S)-5-formyl-5,6,7,8-tetrahydrofolate site is built by Arg25, Glu87, and Arg126. The 155-residue stretch at Gly223–Phe377 folds into the TrmE-type G domain. Asn233 contributes to the K(+) binding site. GTP is bound by residues Asn233 to Ser238, Thr252 to Thr258, and Asp277 to Gly280. Ser237 contacts Mg(2+). Positions 252, 254, and 257 each coordinate K(+). Thr258 contributes to the Mg(2+) binding site. Lys457 lines the (6S)-5-formyl-5,6,7,8-tetrahydrofolate pocket.

This sequence belongs to the TRAFAC class TrmE-Era-EngA-EngB-Septin-like GTPase superfamily. TrmE GTPase family. As to quaternary structure, homodimer. Heterotetramer of two MnmE and two MnmG subunits. It depends on K(+) as a cofactor.

It localises to the cytoplasm. In terms of biological role, exhibits a very high intrinsic GTPase hydrolysis rate. Involved in the addition of a carboxymethylaminomethyl (cmnm) group at the wobble position (U34) of certain tRNAs, forming tRNA-cmnm(5)s(2)U34. In Streptococcus gordonii (strain Challis / ATCC 35105 / BCRC 15272 / CH1 / DL1 / V288), this protein is tRNA modification GTPase MnmE.